The sequence spans 364 residues: Methylthioribose-1-phosphate isomerase (364 aa).

Residues Arg-53 to Ala-55, Arg-90, and Gln-200 contribute to the substrate site. Residue Asp-241 is the Proton donor of the active site. Asn-251 to Lys-252 lines the substrate pocket.

The protein belongs to the eIF-2B alpha/beta/delta subunits family. MtnA subfamily.

The enzyme catalyses 5-(methylsulfanyl)-alpha-D-ribose 1-phosphate = 5-(methylsulfanyl)-D-ribulose 1-phosphate. Its pathway is amino-acid biosynthesis; L-methionine biosynthesis via salvage pathway; L-methionine from S-methyl-5-thio-alpha-D-ribose 1-phosphate: step 1/6. Catalyzes the interconversion of methylthioribose-1-phosphate (MTR-1-P) into methylthioribulose-1-phosphate (MTRu-1-P). The chain is Methylthioribose-1-phosphate isomerase from Methylobacterium nodulans (strain LMG 21967 / CNCM I-2342 / ORS 2060).